A 307-amino-acid chain; its full sequence is Aspartate carbamoyltransferase catalytic subunit (307 aa).

2 residues coordinate carbamoyl phosphate: Arg54 and Thr55. Lys83 is an L-aspartate binding site. The carbamoyl phosphate site is built by Arg104, His132, and Gln135. The L-aspartate site is built by Arg165 and Arg228. Residues Leu267 and Pro268 each contribute to the carbamoyl phosphate site.

It belongs to the aspartate/ornithine carbamoyltransferase superfamily. ATCase family. Heterododecamer (2C3:3R2) of six catalytic PyrB chains organized as two trimers (C3), and six regulatory PyrI chains organized as three dimers (R2).

It carries out the reaction carbamoyl phosphate + L-aspartate = N-carbamoyl-L-aspartate + phosphate + H(+). It functions in the pathway pyrimidine metabolism; UMP biosynthesis via de novo pathway; (S)-dihydroorotate from bicarbonate: step 2/3. In terms of biological role, catalyzes the condensation of carbamoyl phosphate and aspartate to form carbamoyl aspartate and inorganic phosphate, the committed step in the de novo pyrimidine nucleotide biosynthesis pathway. The polypeptide is Aspartate carbamoyltransferase catalytic subunit (Clostridium botulinum (strain Alaska E43 / Type E3)).